The chain runs to 1083 residues: Integrator complex subunit 3 homolog (1083 aa).

Disordered stretches follow at residues 551-579 (NEAVFSDDENLPSTSKNEENTDDDDDLPL), 929-953 (YPSSSPNKRKRPSKGSSAASSTPSA), and 1014-1083 (AVGR…NDSD). Low complexity predominate over residues 942-953 (KGSSAASSTPSA). A phosphoserine mark is found at S1053, S1054, S1058, and S1059. The span at 1066 to 1077 (HKVTQPAKKRKK) shows a compositional bias: basic residues.

The protein belongs to the Integrator subunit 3 family. As to quaternary structure, belongs to the multiprotein complex Integrator, at least composed of IntS1, IntS2, IntS3, IntS4, omd/IntS5, IntS6, defl/IntS7, IntS8, IntS9, IntS10, IntS11, IntS12, asun/IntS13, IntS14 and IntS15. The core complex associates with protein phosphatase 2A subunits mts/PP2A and Pp2A-29B, to form the Integrator-PP2A (INTAC) complex.

The protein resides in the nucleus. It localises to the cytoplasm. Functionally, component of the integrator complex, a multiprotein complex that terminates RNA polymerase II (Pol II) transcription in the promoter-proximal region of genes. The integrator complex provides a quality checkpoint during transcription elongation by driving premature transcription termination of transcripts that are unfavorably configured for transcriptional elongation: the complex terminates transcription by (1) catalyzing dephosphorylation of the C-terminal domain (CTD) of Pol II subunit Polr2A/Rbp1 and Spt5, and (2) degrading the exiting nascent RNA transcript via endonuclease activity. The integrator complex is also involved in the 3'-end processing of the U7 snRNA, and also the spliceosomal snRNAs U1, U2, U4 and U5. This is Integrator complex subunit 3 homolog (IntS3) from Drosophila grimshawi (Hawaiian fruit fly).